Consider the following 430-residue polypeptide: Enolase (430 aa).

(2R)-2-phosphoglycerate is bound at residue Gln163. Glu205 functions as the Proton donor in the catalytic mechanism. Mg(2+)-binding residues include Asp242, Glu287, and Asp314. 4 residues coordinate (2R)-2-phosphoglycerate: Lys339, Arg368, Ser369, and Lys390. The active-site Proton acceptor is the Lys339.

This sequence belongs to the enolase family. The cofactor is Mg(2+).

It is found in the cytoplasm. It localises to the secreted. The protein localises to the cell surface. It carries out the reaction (2R)-2-phosphoglycerate = phosphoenolpyruvate + H2O. It participates in carbohydrate degradation; glycolysis; pyruvate from D-glyceraldehyde 3-phosphate: step 4/5. Functionally, catalyzes the reversible conversion of 2-phosphoglycerate (2-PG) into phosphoenolpyruvate (PEP). It is essential for the degradation of carbohydrates via glycolysis. The polypeptide is Enolase (Bacillus velezensis (strain DSM 23117 / BGSC 10A6 / LMG 26770 / FZB42) (Bacillus amyloliquefaciens subsp. plantarum)).